A 218-amino-acid chain; its full sequence is Glutathione S-transferase D7 (218 aa).

The region spanning 1–82 (MTPVLYYLPP…YLVSAYGKDE (82 aa)) is the GST N-terminal domain. Residues Ser-11, 52 to 54 (HCI), and 66 to 68 (ESR) each bind glutathione. Positions 88-207 (DFRSRAIVDQ…KEINETGAET (120 aa)) constitute a GST C-terminal domain.

Belongs to the GST superfamily. Theta family. In terms of assembly, homodimer.

The catalysed reaction is RX + glutathione = an S-substituted glutathione + a halide anion + H(+). Conjugation of reduced glutathione to a wide number of exogenous and endogenous hydrophobic electrophiles. The sequence is that of Glutathione S-transferase D7 from Anopheles gambiae (African malaria mosquito).